The primary structure comprises 139 residues: Large ribosomal subunit protein uL16 (139 aa).

Belongs to the universal ribosomal protein uL16 family. As to quaternary structure, part of the 50S ribosomal subunit.

Binds 23S rRNA and is also seen to make contacts with the A and possibly P site tRNAs. In Picosynechococcus sp. (strain ATCC 27264 / PCC 7002 / PR-6) (Agmenellum quadruplicatum), this protein is Large ribosomal subunit protein uL16.